Reading from the N-terminus, the 350-residue chain is Salicylate decarboxylase (350 aa).

The protein belongs to the metallo-dependent hydrolases superfamily. In terms of assembly, homotetramer.

It carries out the reaction salicylate + H(+) = phenol + CO2. Inhibited by AgNO(3), HgCl(2), p-chloromercuribenzoic acid and NiCl(2). Reversibly catalyzes the regioselective carboxylation of phenol to form salicylic acid. Involved in a pathway for the degradation of salicylate via phenol. Also catalyzes the decarboxylation of beta-resorcylic acid (2,4-dihydroxybenzoic acid) into resorcinol (1,3-dihydroxybenzene), gamma-resorcylic acid (2,6-dihydroxybenzoic acid) into resorcinol, 2,3-dihydroxybenzoic acid into catechol (1,2-dihydroxybenzene), and 4-aminosalicylic acid into 3-aminophenol. The polypeptide is Salicylate decarboxylase (Cutaneotrichosporon moniliiforme (Yeast)).